The sequence spans 376 residues: Pyruvate dehydrogenase E1 component subunit beta-2, mitochondrial (376 aa).

The transit peptide at 1–36 (MLGAARRQLGSGPMLGQVLRRLRPATAAAADAARAY) directs the protein to the mitochondrion. Residue E99 participates in thiamine diphosphate binding. K(+) contacts are provided by I152, A200, I201, and D203.

In terms of assembly, tetramer of 2 alpha and 2 beta subunits. Thiamine diphosphate is required as a cofactor.

The protein resides in the mitochondrion matrix. The catalysed reaction is N(6)-[(R)-lipoyl]-L-lysyl-[protein] + pyruvate + H(+) = N(6)-[(R)-S(8)-acetyldihydrolipoyl]-L-lysyl-[protein] + CO2. Functionally, the pyruvate dehydrogenase complex catalyzes the overall conversion of pyruvate to acetyl-CoA and CO(2). It contains multiple copies of three enzymatic components: pyruvate dehydrogenase (E1), dihydrolipoamide acetyltransferase (E2) and lipoamide dehydrogenase (E3). In Oryza sativa subsp. japonica (Rice), this protein is Pyruvate dehydrogenase E1 component subunit beta-2, mitochondrial.